A 1373-amino-acid polypeptide reads, in one-letter code: DNA-directed RNA polymerase subunit beta'' (1373 aa).

Residues cysteine 224, cysteine 296, cysteine 303, and cysteine 306 each contribute to the Zn(2+) site.

The protein belongs to the RNA polymerase beta' chain family. RpoC2 subfamily. In terms of assembly, in plastids the minimal PEP RNA polymerase catalytic core is composed of four subunits: alpha, beta, beta', and beta''. When a (nuclear-encoded) sigma factor is associated with the core the holoenzyme is formed, which can initiate transcription. The cofactor is Zn(2+).

It is found in the plastid. The protein resides in the chloroplast. The catalysed reaction is RNA(n) + a ribonucleoside 5'-triphosphate = RNA(n+1) + diphosphate. Functionally, DNA-dependent RNA polymerase catalyzes the transcription of DNA into RNA using the four ribonucleoside triphosphates as substrates. This chain is DNA-directed RNA polymerase subunit beta'', found in Amborella trichopoda.